A 539-amino-acid chain; its full sequence is MRVTGITPQDLKAYGINDIQEVVYNPDYDTLYREELDPSLEGYERGVLTDLGAVAVDTGIFTGRSPKDKYIVRDDTTRDTLWWSDNGKGKNDNKPLTPETWQHLKGLVTQQLSGKRLFIIDAFCGANPDSRLSVRFITEVAWQAHFVKNMFIRPSDDELEGFEPDFIVMNGAKCTNPDWQAQGLNSENFVAFNLTERMQLIGGTWYGGEMKKGMFSIMNYLLPLKGIASMHCSANVGEKGDVAVFFGLSGTGKTTLSTDPKRRLIGDDEHGWDDDGVFNFEGGCYAKTIRLSEEAEPDIYHAIRRDALLENVTVRDDGSIDFDDASKTENTRVSYPIYHIDNIVKPVSKAGHATKVIFLTADAFGVLPPVSRLTASQTQYHFLSGFTAKLAGTERGVTEPTPTFSACFGAAFLMLHPTQYSEVLVKRMQAAGAQAYLVNTGWNGTGKRISIKDTRAIIDAILNGSLDDAETFTLPLFNLAIPTSLPGVDERILDPRNTYASPEQWQEKAQQLAQLFISNFEKYTDTPAGAALVSAGPQR.

Substrate contacts are provided by Arg64, Tyr206, and Lys212. ATP-binding positions include Lys212, His231, and Gly247 to Thr255. The Mn(2+) site is built by Lys212 and His231. A Mn(2+)-binding site is contributed by Asp268. Residues Glu296, Arg332, Arg448 to Ile449, and Thr454 contribute to the ATP site. Position 332 (Arg332) interacts with substrate.

Belongs to the phosphoenolpyruvate carboxykinase (ATP) family. As to quaternary structure, monomer. Mn(2+) serves as cofactor.

It is found in the cytoplasm. It carries out the reaction oxaloacetate + ATP = phosphoenolpyruvate + ADP + CO2. The protein operates within carbohydrate biosynthesis; gluconeogenesis. Functionally, involved in the gluconeogenesis. Catalyzes the conversion of oxaloacetate (OAA) to phosphoenolpyruvate (PEP) through direct phosphoryl transfer between the nucleoside triphosphate and OAA. This Cronobacter sakazakii (strain ATCC BAA-894) (Enterobacter sakazakii) protein is Phosphoenolpyruvate carboxykinase (ATP).